The chain runs to 201 residues: Probable nicotinate-nucleotide adenylyltransferase (201 aa).

This sequence belongs to the NadD family.

The catalysed reaction is nicotinate beta-D-ribonucleotide + ATP + H(+) = deamido-NAD(+) + diphosphate. Its pathway is cofactor biosynthesis; NAD(+) biosynthesis; deamido-NAD(+) from nicotinate D-ribonucleotide: step 1/1. Catalyzes the reversible adenylation of nicotinate mononucleotide (NaMN) to nicotinic acid adenine dinucleotide (NaAD). The protein is Probable nicotinate-nucleotide adenylyltransferase of Clostridium botulinum (strain ATCC 19397 / Type A).